Consider the following 73-residue polypeptide: Small ribosomal subunit protein bS18B (73 aa).

Belongs to the bacterial ribosomal protein bS18 family. In terms of assembly, part of the 30S ribosomal subunit. Forms a tight heterodimer with protein bS6.

Its function is as follows. Binds as a heterodimer with protein bS6 to the central domain of the 16S rRNA, where it helps stabilize the platform of the 30S subunit. This Frankia alni (strain DSM 45986 / CECT 9034 / ACN14a) protein is Small ribosomal subunit protein bS18B.